A 526-amino-acid chain; its full sequence is Light-independent protochlorophyllide reductase subunit B (526 aa).

Aspartate 36 contacts [4Fe-4S] cluster. Residue aspartate 284 is the Proton donor of the active site. 419–420 (GL) is a substrate binding site.

The protein belongs to the ChlB/BchB/BchZ family. Protochlorophyllide reductase is composed of three subunits; BchL, BchN and BchB. Forms a heterotetramer of two BchB and two BchN subunits. [4Fe-4S] cluster is required as a cofactor.

It carries out the reaction chlorophyllide a + oxidized 2[4Fe-4S]-[ferredoxin] + 2 ADP + 2 phosphate = protochlorophyllide a + reduced 2[4Fe-4S]-[ferredoxin] + 2 ATP + 2 H2O. It participates in porphyrin-containing compound metabolism; bacteriochlorophyll biosynthesis (light-independent). Its function is as follows. Component of the dark-operative protochlorophyllide reductase (DPOR) that uses Mg-ATP and reduced ferredoxin to reduce ring D of protochlorophyllide (Pchlide) to form chlorophyllide a (Chlide). This reaction is light-independent. The NB-protein (BchN-BchB) is the catalytic component of the complex. In Halorhodospira halophila (strain DSM 244 / SL1) (Ectothiorhodospira halophila (strain DSM 244 / SL1)), this protein is Light-independent protochlorophyllide reductase subunit B.